The following is a 710-amino-acid chain: MPVRRYGGRYNNSSPGVSNALSPSTTAGRPLSPSPAAGSKLASTHHDPVPQEAYYVNDEADARHQQQAPFREPSVEVEVEMIDDEPPHGSQKPLSVAPYTANASNSSGRSKRNAITASGYTFYTNERQKTVYEALRSLRPLAELQEPRRVKEYAETSLKDSLYRIIEAHDVIMVAGAFFGDEGKGKTVDAVAHHPLCTCIARVNSGENAGHTVYDKAGRKFVFNLAPSGLLLPGKRNYIGPECVMDPVSFMEKEVIQLIDAGIDYRDRLFIGNVCIVTPYHKLLDLLGSAANSSTLKGMAPVHGSKVMKRGIRLDHIFNDDETLRKRLEKDMDTYLGLLKVKNLSDADVVRLCREENSDGVVRVPDYVIAFAQAKVKVEFLVKLYRDRVRHNPDFPARCDVTYELHAAVLRGEKVLLEGPQSYWLSNARTKFWESTTSADTTAAGLLAASQLNFQKFKSVVLNVHKAPGSSRVGIGACPSSFVPQDYFSAQNIKTLRDLPSETCANFEAVQRTLFRDGFPHSNDKARHNGIMAPVEYSDETGKYNIGVAMAIASAQHHGECGAVTKKPRVCGFFDCVLQHEVNSIQGPYLTISALDRGDEYDKVGVTIAYVYYNPEGKQVDVNGHVYKNGDIIRAGDPVPSEPALYHCHPIVKLIDGWRDNPIAAAKRRRNAPLPRGVCELLSTIEYFTNCKILSIGNGPNGDDIIYLRQ.

2 disordered regions span residues 1–53 (MPVR…PQEA) and 84–110 (DEPP…SGRS). 2 stretches are compositionally biased toward polar residues: residues 10–27 (YNNS…STTA) and 101–110 (ANASNSSGRS). GTP is bound by residues 180–186 (GDEGKGK) and 210–212 (GHT). Asp-181 (proton acceptor) is an active-site residue. The Mg(2+) site is built by Asp-181 and Gly-210. Residues 181–184 (DEGK), 208–211 (NAGH), Thr-295, Lys-309, Gln-421, Thr-437, and Lys-567 each bind IMP. The active-site Proton donor is the His-211. 563–569 (AVTKKPR) serves as a coordination point for substrate. Residues Arg-569 and 697 to 699 (GNG) each bind GTP.

The protein belongs to the adenylosuccinate synthetase family. Homodimer. Mg(2+) is required as a cofactor.

The protein resides in the cytoplasm. It carries out the reaction IMP + L-aspartate + GTP = N(6)-(1,2-dicarboxyethyl)-AMP + GDP + phosphate + 2 H(+). It participates in purine metabolism; AMP biosynthesis via de novo pathway; AMP from IMP: step 1/2. Functionally, plays an important role in the salvage pathway for purine nucleotide biosynthesis. Catalyzes the first committed step in the biosynthesis of AMP from IMP. This chain is Adenylosuccinate synthetase (ADSS), found in Leishmania donovani.